The primary structure comprises 58 residues: uncharacterized protein (58 aa).

A helical transmembrane segment spans residues 12-32 (VALVYISVYFFSCISLIVYFF).

Its subcellular location is the membrane. This is an uncharacterized protein from Saccharomyces cerevisiae (strain ATCC 204508 / S288c) (Baker's yeast).